The following is a 176-amino-acid chain: Envelope protein 167 (176 aa).

Position 1 (M1) is a topological domain, intravirion. The chain crosses the membrane as a helical span at residues 2-22 (YLVLLIAIILFITIILVIFLI). The Virion surface segment spans residues 23–176 (SGLFYPEQNP…AVMAIPRKVL (154 aa)).

The protein belongs to the asfivirus envelope protein p22 family.

It is found in the virion membrane. Its subcellular location is the host cell membrane. In African swine fever virus (isolate Warthog/Namibia/Wart80/1980) (ASFV), this protein is Envelope protein 167.